Here is a 662-residue protein sequence, read N- to C-terminus: Probable lysophospholipase 3 (662 aa).

The N-terminal stretch at 1–19 (MLFNCFGILALLQILPALA) is a signal peptide. Asn74, Asn127, Asn162, Asn196, Asn266, Asn274, Asn303, Asn376, Asn406, Asn411, Asn483, Asn518, Asn523, Asn547, Asn556, Asn574, Asn596, and Asn613 each carry an N-linked (GlcNAc...) asparagine glycan. Positions 76 to 617 (TCPSDYMLRP…EQYCWNGTTV (542 aa)) constitute a PLA2c domain.

The protein belongs to the lysophospholipase family.

It localises to the secreted. It catalyses the reaction a 1-acyl-sn-glycero-3-phosphocholine + H2O = sn-glycerol 3-phosphocholine + a fatty acid + H(+). In terms of biological role, catalyzes the release of fatty acids from lysophospholipids. In Schizosaccharomyces pombe (strain 972 / ATCC 24843) (Fission yeast), this protein is Probable lysophospholipase 3 (plb3).